The following is an 872-amino-acid chain: Probably inactive leucine-rich repeat receptor-like protein kinase At5g06940 (872 aa).

Residues 1–26 (MATRFKHQFSISLALTFFFFFTKTFS) form the signal peptide. The Extracellular segment spans residues 27–540 (FTENEELGNL…RSNFHKKGGK (514 aa)). Residues Asn-55, Asn-63, and Asn-86 are each glycosylated (N-linked (GlcNAc...) asparagine). 18 LRR repeats span residues 79 to 98 (SINL…ICDL), 99 to 122 (PYLT…LSRC), 123 to 146 (VTLE…ISEF), 147 to 169 (SSLK…DLGL), 171 to 193 (FNLQ…AIGK), 195 to 217 (SELV…SFLG), 219 to 243 (LDKL…FVGL), 244 to 267 (TSLR…LGPS), 269 to 292 (KNLV…ICSG), 294 to 316 (RLIN…IGEC), 317 to 340 (LSLE…LWKL), 341 to 365 (PRIK…SLAS), 367 to 389 (LEQV…GLVK), 391 to 412 (LYKF…FCDS), 413 to 435 (PVLS…LKNC), 436 to 459 (KKLV…LADL), 460 to 482 (HVLT…GLQN), and 484 to 506 (KLAL…LVSG). An N-linked (GlcNAc...) asparagine glycan is attached at Asn-129. Residue Asn-255 is glycosylated (N-linked (GlcNAc...) asparagine). N-linked (GlcNAc...) asparagine glycosylation occurs at Asn-297. Asn-374 carries an N-linked (GlcNAc...) asparagine glycan. Residue Asn-419 is glycosylated (N-linked (GlcNAc...) asparagine). Asn-489 is a glycosylation site (N-linked (GlcNAc...) asparagine). The helical transmembrane segment at 541–561 (ALVLSLICLALAIATFLAVLY) threads the bilayer. Residues 562-872 (RYSRKKVQFK…ISSSVSPVSA (311 aa)) lie on the Cytoplasmic side of the membrane. Position 585 is a phosphothreonine (Thr-585). The 275-residue stretch at 589-863 (LMKVVNESCP…VKVIKLLEGI (275 aa)) folds into the Protein kinase domain. Residues 595–603 (ESCPSGSEV) and Lys-617 contribute to the ATP site. Tyr-662, Tyr-699, Tyr-754, and Tyr-761 each carry phosphotyrosine.

The protein belongs to the protein kinase superfamily. Ser/Thr protein kinase family.

It is found in the membrane. This Arabidopsis thaliana (Mouse-ear cress) protein is Probably inactive leucine-rich repeat receptor-like protein kinase At5g06940.